The chain runs to 481 residues: Inosine-5'-monophosphate dehydrogenase (481 aa).

CBS domains are found at residues Val92–Val148 and Met152–Asn209. NAD(+) is bound by residues Asp244 and Gly293–Gly295. 2 residues coordinate K(+): Gly295 and Gly297. Ser298 is a binding site for IMP. Cys300 provides a ligand contact to K(+). Catalysis depends on Cys300, which acts as the Thioimidate intermediate. IMP contacts are provided by residues Asp333–Gly335, Gly356–Ser357, and Tyr380–Gly384. Arg396 serves as the catalytic Proton acceptor. Glu410 is an IMP binding site. Glu464, Ser465, and His466 together coordinate K(+).

This sequence belongs to the IMPDH/GMPR family. As to quaternary structure, homotetramer. Requires K(+) as cofactor.

It catalyses the reaction IMP + NAD(+) + H2O = XMP + NADH + H(+). It participates in purine metabolism; XMP biosynthesis via de novo pathway; XMP from IMP: step 1/1. With respect to regulation, mycophenolic acid (MPA) is a non-competitive inhibitor that prevents formation of the closed enzyme conformation by binding to the same site as the amobile flap. In contrast, mizoribine monophosphate (MZP) is a competitive inhibitor that induces the closed conformation. MPA is a potent inhibitor of mammalian IMPDHs but a poor inhibitor of the bacterial enzymes. MZP is a more potent inhibitor of bacterial IMPDH. Catalyzes the conversion of inosine 5'-phosphate (IMP) to xanthosine 5'-phosphate (XMP), the first committed and rate-limiting step in the de novo synthesis of guanine nucleotides, and therefore plays an important role in the regulation of cell growth. This Helicobacter pylori (strain J99 / ATCC 700824) (Campylobacter pylori J99) protein is Inosine-5'-monophosphate dehydrogenase.